The chain runs to 150 residues: Transcriptional regulator MraZ (150 aa).

SpoVT-AbrB domains are found at residues 5–51 (VANL…PQPE) and 80–123 (ATEC…DEDT).

Belongs to the MraZ family. Forms oligomers.

It localises to the cytoplasm. The protein localises to the nucleoid. The polypeptide is Transcriptional regulator MraZ (Thioalkalivibrio sulfidiphilus (strain HL-EbGR7)).